A 116-amino-acid chain; its full sequence is Large ribosomal subunit protein bL19 (116 aa).

The protein belongs to the bacterial ribosomal protein bL19 family.

In terms of biological role, this protein is located at the 30S-50S ribosomal subunit interface and may play a role in the structure and function of the aminoacyl-tRNA binding site. The polypeptide is Large ribosomal subunit protein bL19 (Staphylococcus aureus (strain USA300)).